The primary structure comprises 317 residues: Acetyl-coenzyme A carboxylase carboxyl transferase subunit alpha (317 aa).

The region spanning 41-291 (KVDKLLRSTY…SMALDSALRD (251 aa)) is the CoA carboxyltransferase C-terminal domain.

It belongs to the AccA family. In terms of assembly, acetyl-CoA carboxylase is a heterohexamer composed of biotin carboxyl carrier protein (AccB), biotin carboxylase (AccC) and two subunits each of ACCase subunit alpha (AccA) and ACCase subunit beta (AccD).

It localises to the cytoplasm. It carries out the reaction N(6)-carboxybiotinyl-L-lysyl-[protein] + acetyl-CoA = N(6)-biotinyl-L-lysyl-[protein] + malonyl-CoA. It functions in the pathway lipid metabolism; malonyl-CoA biosynthesis; malonyl-CoA from acetyl-CoA: step 1/1. Component of the acetyl coenzyme A carboxylase (ACC) complex. First, biotin carboxylase catalyzes the carboxylation of biotin on its carrier protein (BCCP) and then the CO(2) group is transferred by the carboxyltransferase to acetyl-CoA to form malonyl-CoA. This Paramagnetospirillum magneticum (strain ATCC 700264 / AMB-1) (Magnetospirillum magneticum) protein is Acetyl-coenzyme A carboxylase carboxyl transferase subunit alpha.